The primary structure comprises 205 residues: Guanylate kinase (205 aa).

In terms of domain architecture, Guanylate kinase-like spans 5 to 183 (GLLIVFSGPS…AAERVKKIIE (179 aa)). 12–19 (GPSGVGKG) contacts ATP.

The protein belongs to the guanylate kinase family.

It is found in the cytoplasm. The catalysed reaction is GMP + ATP = GDP + ADP. Its function is as follows. Essential for recycling GMP and indirectly, cGMP. This chain is Guanylate kinase (gmk), found in Lactococcus lactis subsp. lactis (strain IL1403) (Streptococcus lactis).